A 316-amino-acid polypeptide reads, in one-letter code: Lys-63-specific deubiquitinase BRCC36 (316 aa).

Ala2 carries the post-translational modification N-acetylalanine. In terms of domain architecture, MPN spans 12–179 (VHLESDAFLV…YTCFQSIQAQ (168 aa)). The Zn(2+) site is built by His122, His124, and Asp135. Residues 122–135 (HSHPHITVWPSHVD) carry the JAMM motif motif. Ser258 is subject to Phosphoserine.

It belongs to the peptidase M67A family. BRCC36 subfamily. In terms of assembly, component of the ARISC complex, at least composed of UIMC1/RAP80, ABRAXAS1, BRCC3/BRCC36, BABAM2 and BABAM1/NBA1. Component of the BRCA1-A complex, at least composed of BRCA1, BARD1, UIMC1/RAP80, ABRAXAS1, BRCC3/BRCC36, babam2 and BABAM1/NBA1. In the BRCA1-A complex, interacts directly with ABRAXAS1 and babam2. Component of the BRISC complex, at least composed of ABRAXAS2, BRCC3/BRCC36, BABAM2 and BABAM1/NBA1. Identified in a complex with SHMT2 and the other subunits of the BRISC complex. In the BRISC complex, interacts directly with ABRAXAS2. Identified in a complex with ABRAXAS2 and NUMA1. The BRISC complex interacts with the CSN complex. Component of the BRCA1/BRCA2 containing complex (BRCC), which also contains BRCA1, BRCA2, BARD1, BABAM2 and RAD51. BRCC is a ubiquitin E3 ligase complex that enhances cellular survival following DNA damage. Interacts with BRCA1. Binds polyubiquitin. Interacts with PWWP2B. Interacts with HDAC1; this interaction is enhanced in the presence of PWWP2B. The cofactor is Zn(2+). Heart, brain, placenta, lung, liver, skeletal muscle, kidney and pancreas. Aberrantly expressed in the vast majority of breast tumors.

It is found in the nucleus. It localises to the cytoplasm. The protein resides in the cytoskeleton. The protein localises to the spindle pole. In terms of biological role, metalloprotease that specifically cleaves 'Lys-63'-linked polyubiquitin chains. Does not have activity toward 'Lys-48'-linked polyubiquitin chains. Component of the BRCA1-A complex, a complex that specifically recognizes 'Lys-63'-linked ubiquitinated histones H2A and H2AX at DNA lesions sites, leading to target the BRCA1-BARD1 heterodimer to sites of DNA damage at double-strand breaks (DSBs). In the BRCA1-A complex, it specifically removes 'Lys-63'-linked ubiquitin on histones H2A and H2AX, antagonizing the RNF8-dependent ubiquitination at double-strand breaks (DSBs). Catalytic subunit of the BRISC complex, a multiprotein complex that specifically cleaves 'Lys-63'-linked ubiquitin in various substrates. Mediates the specific 'Lys-63'-specific deubiquitination associated with the COP9 signalosome complex (CSN), via the interaction of the BRISC complex with the CSN complex. The BRISC complex is required for normal mitotic spindle assembly and microtubule attachment to kinetochores via its role in deubiquitinating NUMA1. Plays a role in interferon signaling via its role in the deubiquitination of the interferon receptor IFNAR1; deubiquitination increases IFNAR1 activity by enhancing its stability and cell surface expression. Acts as a regulator of the NLRP3 inflammasome by mediating deubiquitination of NLRP3, leading to NLRP3 inflammasome assembly. Down-regulates the response to bacterial lipopolysaccharide (LPS) via its role in IFNAR1 deubiquitination. Deubiquitinates HDAC1 and PWWP2B leading to their stabilization. This Homo sapiens (Human) protein is Lys-63-specific deubiquitinase BRCC36 (BRCC3).